The chain runs to 372 residues: Bifunctional enzyme IspD/IspF (372 aa).

The 2-C-methyl-D-erythritol 4-phosphate cytidylyltransferase stretch occupies residues methionine 1–leucine 211. Residues phenylalanine 212–isoleucine 372 form a 2-C-methyl-D-erythritol 2,4-cyclodiphosphate synthase region. A divalent metal cation is bound by residues aspartate 218 and histidine 220. 4-CDP-2-C-methyl-D-erythritol 2-phosphate-binding positions include aspartate 218 to histidine 220 and histidine 244 to serine 245. Histidine 252 provides a ligand contact to a divalent metal cation. 4-CDP-2-C-methyl-D-erythritol 2-phosphate contacts are provided by residues aspartate 266 to glycine 268, phenylalanine 271 to aspartate 275, threonine 342 to glutamate 345, phenylalanine 349, and arginine 352.

In the N-terminal section; belongs to the IspD/TarI cytidylyltransferase family. IspD subfamily. This sequence in the C-terminal section; belongs to the IspF family. Requires a divalent metal cation as cofactor.

It carries out the reaction 2-C-methyl-D-erythritol 4-phosphate + CTP + H(+) = 4-CDP-2-C-methyl-D-erythritol + diphosphate. The enzyme catalyses 4-CDP-2-C-methyl-D-erythritol 2-phosphate = 2-C-methyl-D-erythritol 2,4-cyclic diphosphate + CMP. It functions in the pathway isoprenoid biosynthesis; isopentenyl diphosphate biosynthesis via DXP pathway; isopentenyl diphosphate from 1-deoxy-D-xylulose 5-phosphate: step 2/6. The protein operates within isoprenoid biosynthesis; isopentenyl diphosphate biosynthesis via DXP pathway; isopentenyl diphosphate from 1-deoxy-D-xylulose 5-phosphate: step 4/6. Bifunctional enzyme that catalyzes the formation of 4-diphosphocytidyl-2-C-methyl-D-erythritol from CTP and 2-C-methyl-D-erythritol 4-phosphate (MEP) (IspD), and catalyzes the conversion of 4-diphosphocytidyl-2-C-methyl-D-erythritol 2-phosphate (CDP-ME2P) to 2-C-methyl-D-erythritol 2,4-cyclodiphosphate (ME-CPP) with a corresponding release of cytidine 5-monophosphate (CMP) (IspF). In Campylobacter concisus (strain 13826), this protein is Bifunctional enzyme IspD/IspF.